The following is a 367-amino-acid chain: Phosphoribosylaminoimidazole-succinocarboxamide synthase (367 aa).

This sequence belongs to the SAICAR synthetase family.

It catalyses the reaction 5-amino-1-(5-phospho-D-ribosyl)imidazole-4-carboxylate + L-aspartate + ATP = (2S)-2-[5-amino-1-(5-phospho-beta-D-ribosyl)imidazole-4-carboxamido]succinate + ADP + phosphate + 2 H(+). The protein operates within purine metabolism; IMP biosynthesis via de novo pathway; 5-amino-1-(5-phospho-D-ribosyl)imidazole-4-carboxamide from 5-amino-1-(5-phospho-D-ribosyl)imidazole-4-carboxylate: step 1/2. The polypeptide is Phosphoribosylaminoimidazole-succinocarboxamide synthase (Saccharophagus degradans (strain 2-40 / ATCC 43961 / DSM 17024)).